We begin with the raw amino-acid sequence, 455 residues long: GTPase Der (455 aa).

EngA-type G domains lie at 4–169 (PIVA…PPKH) and 178–353 (IQMA…EQHR). GTP is bound by residues 10-17 (GRPNVGKS), 57-61 (DTGGL), 120-123 (NKCE), 184-191 (GRPNVGKS), 231-235 (DTAGI), and 296-299 (NKWD). The region spanning 354-439 (RRVSTSVVNE…PLKLFWRGKQ (86 aa)) is the KH-like domain.

This sequence belongs to the TRAFAC class TrmE-Era-EngA-EngB-Septin-like GTPase superfamily. EngA (Der) GTPase family. In terms of assembly, associates with the 50S ribosomal subunit.

In terms of biological role, GTPase that plays an essential role in the late steps of ribosome biogenesis. The chain is GTPase Der from Prochlorococcus marinus (strain MIT 9313).